The following is a 724-amino-acid chain: DNA ligase (724 aa).

NAD(+)-binding positions include Asp44–Asp48, Ser93–Leu94, and Glu127. The N6-AMP-lysine intermediate role is filled by Lys129. Positions 150, 186, 307, and 331 each coordinate NAD(+). Zn(2+) contacts are provided by Cys437, Cys440, Cys461, and Cys467. A BRCT domain is found at Thr646–Gly724.

The protein belongs to the NAD-dependent DNA ligase family. LigA subfamily. It depends on Mg(2+) as a cofactor. Requires Mn(2+) as cofactor.

The enzyme catalyses NAD(+) + (deoxyribonucleotide)n-3'-hydroxyl + 5'-phospho-(deoxyribonucleotide)m = (deoxyribonucleotide)n+m + AMP + beta-nicotinamide D-nucleotide.. Its function is as follows. DNA ligase that catalyzes the formation of phosphodiester linkages between 5'-phosphoryl and 3'-hydroxyl groups in double-stranded DNA using NAD as a coenzyme and as the energy source for the reaction. It is essential for DNA replication and repair of damaged DNA. The protein is DNA ligase of Agrobacterium fabrum (strain C58 / ATCC 33970) (Agrobacterium tumefaciens (strain C58)).